The primary structure comprises 559 residues: Dihydroxy-acid dehydratase (559 aa).

Mg(2+) is bound at residue aspartate 78. Cysteine 119 lines the [2Fe-2S] cluster pocket. Aspartate 120 and lysine 121 together coordinate Mg(2+). Lysine 121 is subject to N6-carboxylysine. Residue cysteine 192 participates in [2Fe-2S] cluster binding. Glutamate 446 serves as a coordination point for Mg(2+). Serine 472 functions as the Proton acceptor in the catalytic mechanism.

This sequence belongs to the IlvD/Edd family. Homodimer. It depends on [2Fe-2S] cluster as a cofactor. Requires Mg(2+) as cofactor.

The enzyme catalyses (2R)-2,3-dihydroxy-3-methylbutanoate = 3-methyl-2-oxobutanoate + H2O. It carries out the reaction (2R,3R)-2,3-dihydroxy-3-methylpentanoate = (S)-3-methyl-2-oxopentanoate + H2O. It participates in amino-acid biosynthesis; L-isoleucine biosynthesis; L-isoleucine from 2-oxobutanoate: step 3/4. It functions in the pathway amino-acid biosynthesis; L-valine biosynthesis; L-valine from pyruvate: step 3/4. Its function is as follows. Functions in the biosynthesis of branched-chain amino acids. Catalyzes the dehydration of (2R,3R)-2,3-dihydroxy-3-methylpentanoate (2,3-dihydroxy-3-methylvalerate) into 2-oxo-3-methylpentanoate (2-oxo-3-methylvalerate) and of (2R)-2,3-dihydroxy-3-methylbutanoate (2,3-dihydroxyisovalerate) into 2-oxo-3-methylbutanoate (2-oxoisovalerate), the penultimate precursor to L-isoleucine and L-valine, respectively. The protein is Dihydroxy-acid dehydratase of Wolinella succinogenes (strain ATCC 29543 / DSM 1740 / CCUG 13145 / JCM 31913 / LMG 7466 / NCTC 11488 / FDC 602W) (Vibrio succinogenes).